Here is a 100-residue protein sequence, read N- to C-terminus: Integration host factor subunit alpha (100 aa).

This sequence belongs to the bacterial histone-like protein family. Heterodimer of an alpha and a beta chain.

In terms of biological role, this protein is one of the two subunits of integration host factor, a specific DNA-binding protein that functions in genetic recombination as well as in transcriptional and translational control. The protein is Integration host factor subunit alpha of Buchnera aphidicola subsp. Schizaphis graminum (strain Sg).